The following is a 514-amino-acid chain: Pentatricopeptide repeat-containing protein At4g26800 (514 aa).

11 PPR repeats span residues 122-156, 157-191, 192-226, 227-261, 262-296, 297-331, 332-366, 367-401, 402-436, 437-471, and 472-510; these read DLYTCNILVNCFCRCFQPSSALSYLGKMMKLGIEP, DIVTASSLVNGFCLSNSIKDAVYVAGQMEKMGIKR, DVVVDTILIDTLCKNRLVVPALEVLKRMKDRGISP, NVVTYSSLITGLCKSGRLADAERRLHEMDSKKINP, NVITFSALIDAYAKRGKLSKVDSVYKMMIQMSIDP, NVFTYSSLIYGLCMHNRVDEAIKMLDLMISKGCTP, NVVTYSTLANGFFKSSRVDDGIKLLDDMPQRGVAA, NTVSCNTLIKGYFQAGKIDLALGVFGYMTSNGLIP, NIRSYNIVLAGLFANGEVEKALSRFEHMQKTRNDL, DIITYTIMIHGMCKACMVKEAYDLFYKLKFKRVEP, and DFKAYTIMIAELNRAGMRTEADALNRFYQKHVRQNESAP.

This sequence belongs to the PPR family. P subfamily.

The polypeptide is Pentatricopeptide repeat-containing protein At4g26800 (Arabidopsis thaliana (Mouse-ear cress)).